The chain runs to 972 residues: 116 kDa U5 small nuclear ribonucleoprotein component (972 aa).

The segment at 1–53 is disordered; it reads MDTDLYDEFGNYIGPELDSDDEDDELGRESKELDELEDDDDDDDMGDHDEDHP. Acidic residues-rich tracts occupy residues 17–26 and 34–48; these read LDSDDEDDEL and DELE…MGDH. One can recognise a tr-type G domain in the interval 127-409; the sequence is ELIRNVTLCG…GIHLTKEELK (283 aa). Residues 136–143, 204–208, and 258–261 each bind GTP; these read GHLHHGKT, DTPGH, and NKID.

Belongs to the TRAFAC class translation factor GTPase superfamily. Classic translation factor GTPase family. EF-G/EF-2 subfamily. In terms of assembly, component of the U5 snRNP and the U4/U6-U5 tri-snRNP complex, a building block of the spliceosome. Component of the pre-catalytic, catalytic and post-catalytic spliceosome complexes. Component of the minor spliceosome, which splices U12-type introns.

The protein resides in the nucleus. In terms of biological role, required for pre-mRNA splicing as component of the spliceosome, including pre-catalytic, catalytic and post-catalytic spliceosomal complexes. Component of the U5 snRNP and the U4/U6-U5 tri-snRNP complex, a building block of the spliceosome. As a component of the minor spliceosome, involved in the splicing of U12-type introns in pre-mRNAs. This is 116 kDa U5 small nuclear ribonucleoprotein component (EFTUD2) from Gallus gallus (Chicken).